The primary structure comprises 374 residues: 4-hydroxy-3-methylbut-2-en-1-yl diphosphate synthase (flavodoxin) (374 aa).

The [4Fe-4S] cluster site is built by C268, C271, C303, and E310.

This sequence belongs to the IspG family. The cofactor is [4Fe-4S] cluster.

The enzyme catalyses (2E)-4-hydroxy-3-methylbut-2-enyl diphosphate + oxidized [flavodoxin] + H2O + 2 H(+) = 2-C-methyl-D-erythritol 2,4-cyclic diphosphate + reduced [flavodoxin]. The protein operates within isoprenoid biosynthesis; isopentenyl diphosphate biosynthesis via DXP pathway; isopentenyl diphosphate from 1-deoxy-D-xylulose 5-phosphate: step 5/6. Functionally, converts 2C-methyl-D-erythritol 2,4-cyclodiphosphate (ME-2,4cPP) into 1-hydroxy-2-methyl-2-(E)-butenyl 4-diphosphate. This chain is 4-hydroxy-3-methylbut-2-en-1-yl diphosphate synthase (flavodoxin), found in Geobacillus kaustophilus (strain HTA426).